A 432-amino-acid chain; its full sequence is Glyceraldehyde-3-phosphate dehydrogenase, testis-specific (432 aa).

The testis-specific N-terminal extension stretch occupies residues 1 to 97; it reads MSRRDVVLTN…PPPPPPPKPA (97 aa). Positions 40-101 are disordered; it reads PPPPKVEEPP…PPPKPAKELT (62 aa). The segment covering 44-55 has biased composition (basic and acidic residues); that stretch reads KVEEPPPPKEEP. Pro residues-rich tracts occupy residues 56 to 67 and 75 to 95; these read PPPPPPPPPPQI and APPPPPPPPPPPPPPPPPPPK. NAD(+) is bound by residues 109 to 110, Asp130, Lys175, Tyr197, and Thr217; that span reads RI. D-glyceraldehyde 3-phosphate is bound by residues 247–249, Thr278, 307–308, and Arg330; these read SCT and TG. The active-site Nucleophile is the Cys248. At Ser350 the chain carries Phosphoserine. Asn412 contributes to the NAD(+) binding site.

Belongs to the glyceraldehyde-3-phosphate dehydrogenase family. In terms of assembly, homotetramer. In terms of tissue distribution, expressed in both head and flagellum of epididymal sperm.

The protein resides in the cytoplasm. The catalysed reaction is D-glyceraldehyde 3-phosphate + phosphate + NAD(+) = (2R)-3-phospho-glyceroyl phosphate + NADH + H(+). The protein operates within carbohydrate degradation; glycolysis; pyruvate from D-glyceraldehyde 3-phosphate: step 1/5. Functionally, may play an important role in regulating the switch between different pathways for energy production during spermiogenesis and in the spermatozoon. Required for sperm motility and male fertility. The sequence is that of Glyceraldehyde-3-phosphate dehydrogenase, testis-specific (Gapdhs) from Rattus norvegicus (Rat).